Here is a 137-residue protein sequence, read N- to C-terminus: Large ribosomal subunit protein uL16 (137 aa).

The protein belongs to the universal ribosomal protein uL16 family. As to quaternary structure, part of the 50S ribosomal subunit.

In terms of biological role, binds 23S rRNA and is also seen to make contacts with the A and possibly P site tRNAs. This chain is Large ribosomal subunit protein uL16, found in Acinetobacter baylyi (strain ATCC 33305 / BD413 / ADP1).